A 405-amino-acid chain; its full sequence is ATP-sensitive inward rectifier potassium channel 15 (405 aa).

Residues 1 to 90 (MVARWVKGSE…LQDLWTTVID (90 aa)) lie on the Cytoplasmic side of the membrane. A helical transmembrane segment spans residues 91–117 (MKWRYKLTLFAATFVMTWFLFGVVYYA). Residues 118–143 (IAFIHGDLELGESNSNHTPCIMKVDS) lie on the Extracellular side of the membrane. An intramembrane region (helical; Pore-forming) is located at residues 144–160 (LTGAFLFSLESQTTIGY). Residues 157–162 (TIGYGV) carry the Selectivity filter motif. The Extracellular segment spans residues 161 to 169 (GVRSITEEC). The chain crosses the membrane as a helical span at residues 170 to 195 (PHAIFLLVAQLVITTLIEIFITGTFL). Over 196-405 (AKIARPKKRA…RSLLLQQSNV (210 aa)) the chain is Cytoplasmic.

The protein belongs to the inward rectifier-type potassium channel (TC 1.A.2.1) family. KCNJ15 subfamily. Can form heteromultimeric channels with Kir5.1/KCNJ16. Interacts with PATJ.

The protein resides in the membrane. The protein localises to the cell membrane. It carries out the reaction K(+)(in) = K(+)(out). With respect to regulation, channel activity is regulated by variations of cytosolic pH; reversibly inhibited by acidic pH values. Inhibited by Ba(2+) and Cs(+) in a voltage-dependent manner. Inward rectifier potassium channels are characterized by a greater tendency to allow potassium to flow into the cell rather than out of it. Their voltage dependence is regulated by the concentration of extracellular potassium; as external potassium is raised, the voltage range of the channel opening shifts to more positive voltages. The inward rectification is mainly due to the blockage of outward current by internal magnesium. The sequence is that of ATP-sensitive inward rectifier potassium channel 15 (Kcnj15) from Rattus norvegicus (Rat).